Consider the following 451-residue polypeptide: Zinc metalloproteinase nas-16 (451 aa).

Residues 70-273 enclose the Peptidase M12A domain; the sequence is QVVTKLFSPQ…LTINTAYNCK (204 aa). Intrachain disulfides connect C127–C272, C148–C167, C274–C291, and C296–C305. An N-linked (GlcNAc...) asparagine glycan is attached at N133. Zn(2+) is bound at residue H175. E176 is a catalytic residue. Residues H179 and H185 each contribute to the Zn(2+) site. The region spanning 267–306 is the EGF-like domain; that stretch reads NTAYNCKCPSELLCANGGYTNPSNCLECICPLGYGGVLCD. 2 N-linked (GlcNAc...) asparagine glycosylation sites follow: N363 and N438.

Zn(2+) is required as a cofactor.

It localises to the secreted. Its function is as follows. Metalloprotease. In Caenorhabditis elegans, this protein is Zinc metalloproteinase nas-16 (nas-16).